A 492-amino-acid polypeptide reads, in one-letter code: 2,3-bisphosphoglycerate-independent phosphoglycerate mutase (492 aa).

Aspartate 11 and serine 61 together coordinate Mn(2+). Serine 61 serves as the catalytic Phosphoserine intermediate. Substrate contacts are provided by residues histidine 118, arginine 147–aspartate 148, arginine 178, arginine 184, arginine 248–arginine 251, and lysine 320. The Mn(2+) site is built by aspartate 386, histidine 390, aspartate 427, histidine 428, and histidine 445.

The protein belongs to the BPG-independent phosphoglycerate mutase family. As to quaternary structure, monomer. It depends on Mn(2+) as a cofactor.

The enzyme catalyses (2R)-2-phosphoglycerate = (2R)-3-phosphoglycerate. It participates in carbohydrate degradation; glycolysis; pyruvate from D-glyceraldehyde 3-phosphate: step 3/5. Its function is as follows. Catalyzes the interconversion of 2-phosphoglycerate and 3-phosphoglycerate. The chain is 2,3-bisphosphoglycerate-independent phosphoglycerate mutase from Campylobacter jejuni (strain RM1221).